Consider the following 365-residue polypeptide: Protein RecA (365 aa).

Gly-69–Thr-76 serves as a coordination point for ATP. The tract at residues Leu-344 to Glu-365 is disordered. The span at Asn-347–Glu-365 shows a compositional bias: acidic residues.

This sequence belongs to the RecA family.

Its subcellular location is the cytoplasm. Functionally, can catalyze the hydrolysis of ATP in the presence of single-stranded DNA, the ATP-dependent uptake of single-stranded DNA by duplex DNA, and the ATP-dependent hybridization of homologous single-stranded DNAs. It interacts with LexA causing its activation and leading to its autocatalytic cleavage. In Arthrospira platensis (Spirulina platensis), this protein is Protein RecA.